We begin with the raw amino-acid sequence, 115 residues long: MNLMLALLTNFTLATLLVIIAFWLPQLNVYSEKTSPYECGFDPMGSARLPFSMKFFLVAITFLLFDLEIALLLPLPWASQTTNLNTMLTMALFLIILLAVSLAYEWTQKGLEWTE.

3 consecutive transmembrane segments (helical) span residues 3-23, 55-75, and 84-104; these read LMLA…IAFW, FFLV…LLPL, and LNTM…SLAY.

The protein belongs to the complex I subunit 3 family. Core subunit of respiratory chain NADH dehydrogenase (Complex I) which is composed of 45 different subunits. Interacts with TMEM186. Interacts with TMEM242.

Its subcellular location is the mitochondrion inner membrane. The enzyme catalyses a ubiquinone + NADH + 5 H(+)(in) = a ubiquinol + NAD(+) + 4 H(+)(out). Its function is as follows. Core subunit of the mitochondrial membrane respiratory chain NADH dehydrogenase (Complex I) which catalyzes electron transfer from NADH through the respiratory chain, using ubiquinone as an electron acceptor. Essential for the catalytic activity of complex I. This Bos indicus (Zebu) protein is NADH-ubiquinone oxidoreductase chain 3.